A 139-amino-acid polypeptide reads, in one-letter code: FIVLSQEGSLCSISIEKALPEDRGLYKCVAKNSAGQAECSCQVTVDDAPTGENAKAPEMKARRPKSSLPPVLGTESDATVKKKPAPKTPPKAAMPPQIIQFPEDQKVRAGESVELFGKVAGTQPITCTWMKFRKQIQES.

Residues 48–97 are disordered; it reads APTGENAKAPEMKARRPKSSLPPVLGTESDATVKKKPAPKTPPKAAMPPQ.

This sequence belongs to the protein kinase superfamily. CAMK Ser/Thr protein kinase family. As to quaternary structure, interacts with SVIL. Post-translationally, the C-terminus is deglutamylated by AGTPBP1/CCP1, AGBL1/CCP4 and AGBL4/CCP6, leading to the formation of Myosin light chain kinase, smooth muscle, deglutamylated form. The consequences of C-terminal deglutamylation are unknown.

The catalysed reaction is L-seryl-[myosin light chain] + ATP = O-phospho-L-seryl-[myosin light chain] + ADP + H(+). It carries out the reaction L-threonyl-[myosin light chain] + ATP = O-phospho-L-threonyl-[myosin light chain] + ADP + H(+). Functionally, phosphorylates a specific serine in the N-terminus of a myosin light chain. Also regulates actin-myosin interaction through a non-kinase activity. The polypeptide is Myosin light chain kinase, smooth muscle (MYLK) (Sus scrofa (Pig)).